The primary structure comprises 91 residues: Acyl-CoA-binding domain-containing protein 2 (91 aa).

The region spanning 3–88 (LQEEFEEFAE…VKQLLEEASA (86 aa)) is the ACB domain. Residues Lys-15, 30–34 (YGLYK), Lys-52, Lys-56, and Tyr-75 each bind an acyl-CoA.

The protein belongs to the ACBP family. Highly expressed in leaves. Expressed at low levels in roots and seeds.

Its subcellular location is the cytoplasm. It localises to the cytosol. Functionally, binds medium- and long-chain acyl-CoA esters with high affinity. Can interact in vitro with linolenoyl-CoA. Binds palmitoyl-CoA and linoleoyl-CoA in vitro. Binds phosphatidic acid (PA) and phosphatidylcholine (PC) in vitro. May play a role in the biosynthesis of phospholipids. This is Acyl-CoA-binding domain-containing protein 2 from Oryza sativa subsp. japonica (Rice).